Reading from the N-terminus, the 928-residue chain is Isoleucine--tRNA ligase (928 aa).

Residues 57–67 (PFANGNIHMGH) carry the 'HIGH' region motif. Glutamate 552 serves as a coordination point for L-isoleucyl-5'-AMP. Residues 593-597 (KMSKS) carry the 'KMSKS' region motif. Lysine 596 contacts ATP. Residues cysteine 887, cysteine 890, cysteine 907, and cysteine 910 each coordinate Zn(2+).

Belongs to the class-I aminoacyl-tRNA synthetase family. IleS type 1 subfamily. In terms of assembly, monomer. The cofactor is Zn(2+).

It localises to the cytoplasm. The enzyme catalyses tRNA(Ile) + L-isoleucine + ATP = L-isoleucyl-tRNA(Ile) + AMP + diphosphate. Its function is as follows. Catalyzes the attachment of isoleucine to tRNA(Ile). As IleRS can inadvertently accommodate and process structurally similar amino acids such as valine, to avoid such errors it has two additional distinct tRNA(Ile)-dependent editing activities. One activity is designated as 'pretransfer' editing and involves the hydrolysis of activated Val-AMP. The other activity is designated 'posttransfer' editing and involves deacylation of mischarged Val-tRNA(Ile). The protein is Isoleucine--tRNA ligase of Latilactobacillus sakei subsp. sakei (strain 23K) (Lactobacillus sakei subsp. sakei).